The chain runs to 347 residues: NADH-ubiquinone oxidoreductase chain 2 (347 aa).

Transmembrane regions (helical) follow at residues P3–S23, Y59–M79, V93–V115, N150–L170, I178–P198, T199–L219, I242–P262, N274–M294, and L326–L346.

The protein belongs to the complex I subunit 2 family. In terms of assembly, core subunit of respiratory chain NADH dehydrogenase (Complex I) which is composed of 45 different subunits. Interacts with TMEM242.

It is found in the mitochondrion inner membrane. The enzyme catalyses a ubiquinone + NADH + 5 H(+)(in) = a ubiquinol + NAD(+) + 4 H(+)(out). Functionally, core subunit of the mitochondrial membrane respiratory chain NADH dehydrogenase (Complex I) which catalyzes electron transfer from NADH through the respiratory chain, using ubiquinone as an electron acceptor. Essential for the catalytic activity and assembly of complex I. This Loxodonta africana (African elephant) protein is NADH-ubiquinone oxidoreductase chain 2.